The primary structure comprises 209 residues: Outer-membrane lipoprotein LolB (209 aa).

A signal peptide spans 1–21 (MNNMKTFKFLTALFATAILTA). A lipid anchor (N-palmitoyl cysteine) is attached at Cys22. Cys22 is lipidated: S-diacylglycerol cysteine.

Belongs to the LolB family. Monomer.

It is found in the cell outer membrane. In terms of biological role, plays a critical role in the incorporation of lipoproteins in the outer membrane after they are released by the LolA protein. In Haemophilus influenzae (strain 86-028NP), this protein is Outer-membrane lipoprotein LolB.